Reading from the N-terminus, the 289-residue chain is Thiosulfate sulfurtransferase (289 aa).

One can recognise a Rhodanese 1 domain in the interval 24–142 (VGAGLRVLDA…WVKEGHPVTA (119 aa)). A hinge region spans residues 143–158 (EPSQPAEAVFKAKLDK). One can recognise a Rhodanese 2 domain in the interval 172 to 284 (GSKKFQVVDS…WFHRAPPQYK (113 aa)). Arg186 is a substrate binding site. The active-site Cysteine persulfide intermediate is the Cys244. Substrate is bound at residue Lys246.

As to quaternary structure, monomer. In terms of tissue distribution, expressed in numerous tissues.

The protein resides in the mitochondrion matrix. It carries out the reaction thiosulfate + hydrogen cyanide = thiocyanate + sulfite + 2 H(+). Together with MRPL18, acts as a mitochondrial import factor for the cytosolic 5S rRNA. Only the nascent unfolded cytoplasmic form is able to bind to the 5S rRNA. Formation of iron-sulfur complexes and cyanide detoxification. This Gallus gallus (Chicken) protein is Thiosulfate sulfurtransferase (TST).